The sequence spans 138 residues: Basic phospholipase A2 homolog bothropstoxin-II (138 aa).

A signal peptide spans 1-16 (MRTLWIMAVLLVGVEG). 7 cysteine pairs are disulfide-bonded: Cys42–Cys131, Cys44–Cys60, Cys59–Cys111, Cys65–Cys138, Cys66–Cys104, Cys73–Cys97, and Cys91–Cys102. The important for membrane-damaging activities in eukaryotes and bacteria; heparin-binding stretch occupies residues 121–133 (KRYMAYPDVLCKK).

The protein belongs to the phospholipase A2 family. Group II subfamily. D49 sub-subfamily. As to quaternary structure, homodimer; non-covalently linked (probable alternative/compact dimer conformation). As to expression, expressed by the venom gland.

It is found in the secreted. Its function is as follows. Snake venom phospholipase A2 (PLA2) that shows low enzymatic activity even tough it conserves the catalytic residues. Shows a strong myotoxic activity and induces indirect hemolysis, anticoagulant properties, and cytotoxic activities. In vivo, it induces muscle necrosis, accompanied by polymorphonuclear cell infiltration, and edema in the mouse paw. It exerts its function even in the absence of extracellular calcium, indicating it is not a calcium-dependent enzyme. A model of myotoxic mechanism has been proposed: an apo Lys49-PLA2 is activated by the entrance of a hydrophobic molecule (e.g. fatty acid) at the hydrophobic channel of the protein leading to a reorientation of a monomer. This reorientation causes a transition between 'inactive' to 'active' states, causing alignment of C-terminal and membrane-docking sites (MDoS) side-by-side and putting the membrane-disruption sites (MDiS) in the same plane, exposed to solvent and in a symmetric position for both monomers. The MDoS region stabilizes the toxin on membrane by the interaction of charged residues with phospholipid head groups. Subsequently, the MDiS region destabilizes the membrane with penetration of hydrophobic residues. This insertion causes a disorganization of the membrane, allowing an uncontrolled influx of ions (i.e. calcium and sodium), and eventually triggering irreversible intracellular alterations and cell death. This Bothrops jararacussu (Jararacussu) protein is Basic phospholipase A2 homolog bothropstoxin-II.